The chain runs to 96 residues: Translation initiation factor 1A 1 (96 aa).

The region spanning 8–82 (GSHDLRMPDD…EKGDITWRYE (75 aa)) is the S1-like domain.

Belongs to the eIF-1A family.

Its function is as follows. Seems to be required for maximal rate of protein biosynthesis. Enhances ribosome dissociation into subunits and stabilizes the binding of the initiator Met-tRNA(I) to 40 S ribosomal subunits. This chain is Translation initiation factor 1A 1, found in Haloquadratum walsbyi (strain DSM 16790 / HBSQ001).